A 309-amino-acid chain; its full sequence is THO complex subunit Tho3 (309 aa).

6 WD repeats span residues 22–61, 65–107, 109–148, 192–231, 234–273, and 275–309; these read GQQG…FKFT, GNRG…PIAE, ESNY…IMET, AHNS…CERS, RMDY…QIWK, and PTNG…IFGL.

Belongs to the THOC3 family. As to quaternary structure, component of the transcription/export (TREX) complex, which is at least is formed of SUB2, TEX1 and YRA1 and the THO complex composed of HPR1, MFT1, THO2 and THP1.

The protein resides in the nucleus. In terms of biological role, component of the TREX complex, which operates in coupling transcription elongation to mRNA export. This Schizosaccharomyces pombe (strain 972 / ATCC 24843) (Fission yeast) protein is THO complex subunit Tho3 (THO3).